The following is a 261-amino-acid chain: Ice-binding protein (261 aa).

Residues 1-20 (MSLLSIITIGLAGLGGLVNG) form the signal peptide. N-linked (GlcNAc...) asparagine glycosylation occurs at asparagine 185.

It belongs to the ice-binding protein family. In terms of assembly, homodimer. Dimerization is not required for the thermal hysteresis (TH) activity. In terms of processing, glycosylated. Glycosylation is not required for the thermal hysteresis (TH) activity. Glycosylation may increase stability and secretion of this protein.

Its subcellular location is the secreted. Its function is as follows. Confers freeze tolerance. Binds to the surface of ice crystals and inhibits their growth. Has low thermal hysteresis (TH) activity, which is the ability to lower the freezing point of an aqueous solution below its melting point. The TH activity of this protein is approximately 0.2 degrees Celsius at 50 uM and 0.3 degrees Celsius at 400 uM. The chain is Ice-binding protein from Leucosporidium sp. (strain AY30) (Arctic yeast).